Consider the following 433-residue polypeptide: Homeobox protein Hox-D3 (433 aa).

Disordered stretches follow at residues 44–198, 258–280, and 401–433; these read STPH…SKRV, GILHSPAGQSPERSPPLGGAAGH, and HHGPCDPHPTYTDLSAHHSSQGRLPEAPKLTHL. The segment covering 58 to 74 has biased composition (polar residues); that stretch reads SLDSDYPSSACSIQSSA. Over residues 97-106 the composition is skewed to gly residues; sequence NSQGGGGGNQ. Over residues 116-132 the composition is skewed to pro residues; that stretch reads PPQPPPPPPPTLPPSSP. The segment covering 146–159 has biased composition (low complexity); it reads GGLSASSSSSTISK. The Antp-type hexapeptide motif lies at 161–166; that stretch reads IFPWMK. A compositionally biased stretch (polar residues) spans 171 to 183; that stretch reads NSKQKNSCATSGE. The segment at residues 195–254 is a DNA-binding region (homeobox); the sequence is SKRVRTAYTSAQLVELEKEFHFNRYLCRPRRVEMANLLNLTERQIKIWFQNRRMKYKKDQ.

The protein belongs to the Antp homeobox family. Detected in adult kidney, but not in other adult tissues tested.

It is found in the nucleus. In terms of biological role, sequence-specific transcription factor which is part of a developmental regulatory system that provides cells with specific positional identities on the anterior-posterior axis. This is Homeobox protein Hox-D3 (Hoxd3) from Mus musculus (Mouse).